The chain runs to 197 residues: Imidazoleglycerol-phosphate dehydratase (197 aa).

It belongs to the imidazoleglycerol-phosphate dehydratase family.

The protein resides in the cytoplasm. It catalyses the reaction D-erythro-1-(imidazol-4-yl)glycerol 3-phosphate = 3-(imidazol-4-yl)-2-oxopropyl phosphate + H2O. The protein operates within amino-acid biosynthesis; L-histidine biosynthesis; L-histidine from 5-phospho-alpha-D-ribose 1-diphosphate: step 6/9. In Erythrobacter litoralis (strain HTCC2594), this protein is Imidazoleglycerol-phosphate dehydratase.